Consider the following 90-residue polypeptide: Putative regulatory protein Cbei_1140 (90 aa).

Belongs to the RemA family.

This is Putative regulatory protein Cbei_1140 from Clostridium beijerinckii (strain ATCC 51743 / NCIMB 8052) (Clostridium acetobutylicum).